The sequence spans 402 residues: Homoserine O-acetyltransferase (402 aa).

The segment covering 1–17 (MDWQTTSADTAPSSFIT) has biased composition (polar residues). Positions 1–39 (MDWQTTSADTAPSSFITEEQDRSLFGKPPASGAWKESDP) are disordered. In terms of domain architecture, AB hydrolase-1 spans 78-388 (NAVLVLHALT…HFGHDGFLIE (311 aa)). Ser-183 (nucleophile) is an active-site residue. Arg-255 is a substrate binding site. Residues Asp-349 and His-382 contribute to the active site. Position 383 (Asp-383) interacts with substrate.

It belongs to the AB hydrolase superfamily. MetX family. In terms of assembly, homodimer.

Its subcellular location is the cytoplasm. It carries out the reaction L-homoserine + acetyl-CoA = O-acetyl-L-homoserine + CoA. It participates in amino-acid biosynthesis; L-methionine biosynthesis via de novo pathway; O-acetyl-L-homoserine from L-homoserine: step 1/1. Transfers an acetyl group from acetyl-CoA to L-homoserine, forming acetyl-L-homoserine. The polypeptide is Homoserine O-acetyltransferase (Leifsonia xyli subsp. xyli (strain CTCB07)).